Consider the following 339-residue polypeptide: Transmembrane protein 120B (339 aa).

A coiled-coil region spans residues 1–67; it reads MSGQLERCER…KHTLQRYKRH (67 aa). The next 6 helical transmembrane spans lie at 102-124, 132-152, 159-179, 187-207, 270-290, and 302-322; these read GLYLNLVLGNVSVTLLSNQAKFA, FKLYLTIILLLGAVACRFVLH, VFNFLLVWYYCTLTIRESILI, GWWVSHHYVSTFLSGVMLTWP, FLLPFLFCGHFWQLYNAVTLF, and QVFVLALTFLILFLGNFLTTL.

It belongs to the TMEM120 family. Heterooligomer with TMEM120A. Expressed in inguinal and subcutaneous white adipose tissue and in brown adipose tissue.

It is found in the nucleus inner membrane. Functionally, necessary for efficient adipogenesis. Does not show ion channel activity. In Mus musculus (Mouse), this protein is Transmembrane protein 120B.